The following is a 425-amino-acid chain: Fe(2+) transport protein 3, chloroplastic (425 aa).

The chain crosses the membrane as a helical span at residues 65 to 85; it reads FVAIASILLAGAAGVTIPLIG. At 86 to 97 the chain is on the cytoplasmic side; that stretch reads RNRRFLQTDGNL. Residues 98–118 form a helical membrane-spanning segment; the sequence is FVTAKAFAAGVILATGFVHML. Over 119–137 the chain is Lumenal; sequence AGGTEALKNPCLPDFPWSK. Residues 138–158 form a helical membrane-spanning segment; it reads FPFPGFFAMIAALITLFVDFM. The Cytoplasmic segment spans residues 159-269; that stretch reads GTQYYERKQE…GLDAVNGARH (111 aa). A helical membrane pass occupies residues 270–290; that stretch reads IVVSQVLELGIVSHSIIIGLS. Topologically, residues 291 to 301 are lumenal; the sequence is LGVSQSPCTIR. Residues 302-322 form a helical membrane-spanning segment; the sequence is PLIAALSFHQFFEGFALGGCI. The Cytoplasmic segment spans residues 323 to 333; the sequence is SQAQFRNKSAT. A helical transmembrane segment spans residues 334-354; sequence IMACFFALTTPIGIGIGTAVA. Residues 355-369 lie on the Lumenal side of the membrane; the sequence is SSFNSHSVGALVTEG. A helical membrane pass occupies residues 370–390; that stretch reads ILDSLSAGILVYMALVDLIAA. Residues 391–404 are Cytoplasmic-facing; the sequence is DFLSTKMRCNFRLQ. A helical membrane pass occupies residues 405–425; it reads IVSYVMLFLGAGLMSSLAIWA.

The protein belongs to the ZIP transporter (TC 2.A.5) family.

It is found in the plastid. It localises to the chloroplast thylakoid membrane. Functionally, may play a role in the transport of iron in the plastids. This chain is Fe(2+) transport protein 3, chloroplastic (IRT3), found in Arabidopsis thaliana (Mouse-ear cress).